The sequence spans 161 residues: Nucleotide-binding protein Pnec_0318 (161 aa).

It belongs to the YajQ family.

Its function is as follows. Nucleotide-binding protein. This is Nucleotide-binding protein Pnec_0318 from Polynucleobacter necessarius subsp. necessarius (strain STIR1).